The chain runs to 107 residues: MTRLPPIPRMTVTLTTRPAVPTCNEGSSILHYIYIPIYEPNEQKEKRRRKTPPEPRAYTTTTTIATNSRISGCSLTLEDGIHLRGKRAETARLPAATPQKRTGPARG.

The disordered stretch occupies residues 86–107 (KRAETARLPAATPQKRTGPARG).

This is an uncharacterized protein from Saccharomyces cerevisiae (strain ATCC 204508 / S288c) (Baker's yeast).